The primary structure comprises 122 residues: Small ribosomal subunit protein uS13 (122 aa).

The tract at residues 98–122 is disordered; it reads VRGQRTHTNARTRKGPAKAIAGKKK.

This sequence belongs to the universal ribosomal protein uS13 family. As to quaternary structure, part of the 30S ribosomal subunit. Forms a loose heterodimer with protein S19. Forms two bridges to the 50S subunit in the 70S ribosome.

Its function is as follows. Located at the top of the head of the 30S subunit, it contacts several helices of the 16S rRNA. In the 70S ribosome it contacts the 23S rRNA (bridge B1a) and protein L5 of the 50S subunit (bridge B1b), connecting the 2 subunits; these bridges are implicated in subunit movement. Contacts the tRNAs in the A and P-sites. This chain is Small ribosomal subunit protein uS13, found in Jannaschia sp. (strain CCS1).